The sequence spans 197 residues: FMN-dependent NADH:quinone oxidoreductase (197 aa).

Position 10 (Ser-10) interacts with FMN.

The protein belongs to the azoreductase type 1 family. In terms of assembly, homodimer. FMN serves as cofactor.

It catalyses the reaction 2 a quinone + NADH + H(+) = 2 a 1,4-benzosemiquinone + NAD(+). It carries out the reaction N,N-dimethyl-1,4-phenylenediamine + anthranilate + 2 NAD(+) = 2-(4-dimethylaminophenyl)diazenylbenzoate + 2 NADH + 2 H(+). In terms of biological role, quinone reductase that provides resistance to thiol-specific stress caused by electrophilic quinones. Its function is as follows. Also exhibits azoreductase activity. Catalyzes the reductive cleavage of the azo bond in aromatic azo compounds to the corresponding amines. This chain is FMN-dependent NADH:quinone oxidoreductase, found in Mycoplasma pneumoniae (strain ATCC 29342 / M129 / Subtype 1) (Mycoplasmoides pneumoniae).